Reading from the N-terminus, the 423-residue chain is MSYVIDRRLNGKNKSTVNRQRFLQRYRGHIKKAVEEAVGRRSITDMEHGEQISIPGRDIDEPVLHHGRGGRQTIVHPGNKEFVAGERIPRPQGGGGGQGAGQASNSGEGMDDFVFQITQEEFLDFMFEDLELPNLVKRHLTGTDTFKTVRAGIANEGNPSRINIVRTLRSAHARRIALSGSSRAQLRALKAELERLRLEEPHNFGDIKAAEEEIERLKARINRVPFLDTFDLKYNLLVKHPNPSSKAVMFCLMDVSGSMTQSTKDIAKRFFILLYLFLKRNYDKIDVVFIRHHTSAKEVDEEEFFYSRETGGTIVSSALKMMQEIMAERYPANEWNIYAAQASDGDNWNDDSPLCRDILINQIMPFVQYFTYVEITPREHQALWYEYNQVAEAFSDAFAQQQLVSAADIYPVFRELFQRRMTS.

A disordered region spans residues 84-109 (AGERIPRPQGGGGGQGAGQASNSGEG).

Belongs to the UPF0229 family.

The protein is UPF0229 protein PST_0721 of Stutzerimonas stutzeri (strain A1501) (Pseudomonas stutzeri).